The sequence spans 467 residues: 3-isopropylmalate dehydratase large subunit (467 aa).

[4Fe-4S] cluster contacts are provided by C347, C408, and C411.

The protein belongs to the aconitase/IPM isomerase family. LeuC type 1 subfamily. Heterodimer of LeuC and LeuD. [4Fe-4S] cluster is required as a cofactor.

It carries out the reaction (2R,3S)-3-isopropylmalate = (2S)-2-isopropylmalate. Its pathway is amino-acid biosynthesis; L-leucine biosynthesis; L-leucine from 3-methyl-2-oxobutanoate: step 2/4. Functionally, catalyzes the isomerization between 2-isopropylmalate and 3-isopropylmalate, via the formation of 2-isopropylmaleate. The polypeptide is 3-isopropylmalate dehydratase large subunit (Bordetella pertussis (strain Tohama I / ATCC BAA-589 / NCTC 13251)).